Here is an 86-residue protein sequence, read N- to C-terminus: Candiduxin-2 (86 aa).

The first 21 residues, 1–21 (MKTLLLTLVVLTIACLDLGYT), serve as a signal peptide directing secretion. Cystine bridges form between Cys-24–Cys-45, Cys-38–Cys-62, Cys-66–Cys-78, and Cys-79–Cys-84.

The protein belongs to the three-finger toxin family. Short-chain subfamily. Orphan group IX sub-subfamily. Expressed by the venom gland.

Its subcellular location is the secreted. This is Candiduxin-2 from Bungarus candidus (Malayan krait).